Reading from the N-terminus, the 210-residue chain is High-affinity nitrate transporter 3.1 (210 aa).

Positions Met1–Gly22 are cleaved as a signal peptide. The helical transmembrane segment at Leu178–Val198 threads the bilayer.

It belongs to the NAR2 family. As to quaternary structure, heterotetramer composed of two NRT2.1 and two NRT3.1. Interacts with NRT2.1 and NRT2.3. Interacts with all other NRT2 transporters, including NRT2.5. As to expression, highly expressed in roots. Detected in shoots.

Its subcellular location is the cell membrane. Functionally, acts as a dual component transporter with NTR2.1. Required for high-affinity nitrate transport. Acts as a repressor of lateral root initiation. May be involved in targeting NRT2 proteins to the plasma membrane. This is High-affinity nitrate transporter 3.1 (NRT3.1) from Arabidopsis thaliana (Mouse-ear cress).